We begin with the raw amino-acid sequence, 136 residues long: Histone H3.3C-like (136 aa).

An Asymmetric dimethylarginine; by PRMT6; alternate modification is found at R3. R3 carries the citrulline; alternate modification. Phosphothreonine; by HASPIN is present on T4. K5 carries the allysine; alternate modification. K5 bears the N6,N6,N6-trimethyllysine; alternate mark. Position 5 is an N6,N6-dimethyllysine; alternate (K5). The residue at position 5 (K5) is an N6-(2-hydroxyisobutyryl)lysine; alternate. At K5 the chain carries N6-(beta-hydroxybutyryl)lysine; alternate. K5 is subject to N6-acetyllysine; alternate. The residue at position 5 (K5) is an N6-methyllysine; alternate. Residue T7 is modified to Phosphothreonine; by PKC. Position 10 is an N6,N6,N6-trimethyllysine; alternate (K10). K10 bears the N6,N6-dimethyllysine; alternate mark. N6-(2-hydroxyisobutyryl)lysine; alternate is present on K10. K10 is modified (N6-acetyllysine; alternate). K10 carries the N6-methyllysine; alternate modification. S11 is subject to ADP-ribosylserine; alternate. Residue S11 is modified to Phosphoserine; alternate; by AURKB, AURKC, RPS6KA3, RPS6KA4 and RPS6KA5. T12 carries the post-translational modification Phosphothreonine; by PKC. K15 is modified (N6-(2-hydroxyisobutyryl)lysine; alternate). K15 is subject to N6-(beta-hydroxybutyryl)lysine; alternate. Residue K15 is modified to N6-acetyllysine; alternate. K15 bears the N6-glutaryllysine; alternate mark. Position 15 is an N6-succinyllysine; alternate (K15). At R18 the chain carries Citrulline; alternate. Asymmetric dimethylarginine; by CARM1; alternate is present on R18. An N6-(2-hydroxyisobutyryl)lysine; alternate mark is found at K19 and K28. The residue at position 19 (K19) is an N6-(beta-hydroxybutyryl)lysine; alternate. K19 and K28 each carry N6-acetyllysine; alternate. An N6-methyllysine; alternate mark is found at K19 and K28. N6-glutaryllysine; alternate occurs at positions 19 and 28. K19 carries the N6-butyryllysine; alternate modification. An N6,N6,N6-trimethyllysine; alternate modification is found at K28. At K28 the chain carries N6,N6-dimethyllysine; alternate. S29 carries the post-translational modification ADP-ribosylserine; alternate. S29 carries the phosphoserine; alternate; by AURKB, AURKC and RPS6KA5 modification. S32 is subject to Phosphoserine. K38 carries the post-translational modification N6-methyllysine. Y42 carries the post-translational modification Phosphotyrosine. An N6,N6,N6-trimethyllysine; alternate modification is found at K57. K57 carries the N6-(2-hydroxyisobutyryl)lysine; alternate modification. K57 carries the post-translational modification N6-(beta-hydroxybutyryl)lysine; alternate. Position 57 is an N6-acetyllysine; alternate (K57). K57 bears the N6-glutaryllysine; alternate mark. An N6-succinyllysine; alternate modification is found at K57. K57 is subject to N6-methyllysine; by EHMT2; alternate. Residue S58 is modified to Phosphoserine. Residues K65 and K80 each carry the N6-(2-hydroxyisobutyryl)lysine; alternate modification. An N6-methyllysine; alternate mark is found at K65 and K80. An N6,N6,N6-trimethyllysine; alternate modification is found at K80. K80 bears the N6,N6-dimethyllysine; alternate mark. K80 is subject to N6-acetyllysine; alternate. Position 80 is an N6-glutaryllysine; alternate (K80). K80 is modified (N6-succinyllysine; alternate). T81 bears the Phosphothreonine mark. The residue at position 87 (S87) is a Phosphoserine.

This sequence belongs to the histone H3 family. As to quaternary structure, the nucleosome is a histone octamer containing two molecules each of H2A, H2B, H3 and H4 assembled in one H3-H4 heterotetramer and two H2A-H2B heterodimers. The octamer wraps approximately 147 bp of DNA. Post-translationally, acetylation is generally linked to gene activation. Acetylation on Lys-19 favors methylation at Arg-18. Citrullination at Arg-18 by PADI4 impairs methylation and represses transcription. In terms of processing, asymmetric dimethylation at Arg-18 (H3R17me2a) by CARM1 is linked to gene activation. Asymmetric dimethylation at Arg-3 (H3R2me2a) by PRMT6 is linked to gene repression and is mutually exclusive with H3 Lys-5 methylation (H3K4me2 and H3K4me3). H3R2me2a is present at the 3' of genes regardless of their transcription state and is enriched on inactive promoters, while it is absent on active promoters. Post-translationally, methylation at Lys-5 (H3K4me) and Lys-80 (H3K79me) are linked to gene activation. Methylation at Lys-5 (H3K4me) facilitates subsequent acetylation of H3 and H4. Methylation at Lys-80 (H3K79me) is associated with DNA double-strand break (DSB) responses and is a specific target for TP53BP1. Methylation at Lys-10 (H3K9me) and Lys-28 (H3K27me) are linked to gene repression. Methylation at Lys-10 (H3K9me) is a specific target for HP1 proteins (CBX1, CBX3 and CBX5) and prevents subsequent phosphorylation at Ser-11 (H3S10ph) and acetylation of H3 and H4. Methylation at Lys-5 (H3K4me) and Lys-80 (H3K79me) require preliminary monoubiquitination of H2B at 'Lys-120'. Methylation at Lys-10 (H3K9me) and Lys-28 (H3K27me) are enriched in inactive X chromosome chromatin. Monomethylation at Lys-57 (H3K56me1) by EHMT2/G9A in G1 phase promotes interaction with PCNA and is required for DNA replication. Phosphorylated at Thr-4 (H3T3ph) by HASPIN during prophase and dephosphorylated during anaphase. Phosphorylation at Ser-11 (H3S10ph) by AURKB is crucial for chromosome condensation and cell-cycle progression during mitosis and meiosis. In addition phosphorylation at Ser-11 (H3S10ph) by RPS6KA4 and RPS6KA5 is important during interphase because it enables the transcription of genes following external stimulation, like mitogens, stress, growth factors or UV irradiation and result in the activation of genes, such as c-fos and c-jun. Phosphorylation at Ser-11 (H3S10ph), which is linked to gene activation, prevents methylation at Lys-10 (H3K9me) but facilitates acetylation of H3 and H4. Phosphorylation at Ser-11 (H3S10ph) by AURKB mediates the dissociation of HP1 proteins (CBX1, CBX3 and CBX5) from heterochromatin. Phosphorylation at Ser-11 (H3S10ph) is also an essential regulatory mechanism for neoplastic cell transformation. Phosphorylated at Ser-29 (H3S28ph) by MAP3K20 isoform 1, RPS6KA5 or AURKB during mitosis or upon ultraviolet B irradiation. Phosphorylation at Thr-7 (H3T6ph) by PRKCB is a specific tag for epigenetic transcriptional activation that prevents demethylation of Lys-5 (H3K4me) by LSD1/KDM1A. At centromeres, specifically phosphorylated at Thr-12 (H3T11ph) from prophase to early anaphase, by DAPK3 and PKN1. Phosphorylation at Thr-12 (H3T11ph) by PKN1 or isoform M2 of PKM (PKM2) is a specific tag for epigenetic transcriptional activation that promotes demethylation of Lys-10 (H3K9me) by KDM4C/JMJD2C. Phosphorylation at Tyr-42 (H3Y41ph) by JAK2 promotes exclusion of CBX5 (HP1 alpha) from chromatin. In terms of processing, lysine deamination at Lys-5 (H3K4all) to form allysine is mediated by LOXL2. Allysine formation by LOXL2 only takes place on H3K4me3 and results in gene repression. Post-translationally, butyrylation of histones marks active promoters and competes with histone acetylation. It is present during late spermatogenesis. Succinylation at Lys-80 (H3K79succ) by KAT2A takes place with a maximum frequency around the transcription start sites of genes. It gives a specific tag for epigenetic transcription activation. In terms of processing, serine ADP-ribosylation constitutes the primary form of ADP-ribosylation of proteins in response to DNA damage. Serine ADP-ribosylation at Ser-11 (H3S10ADPr) is mutually exclusive with phosphorylation at Ser-11 (H3S10ph) and impairs acetylation at Lys-10 (H3K9ac).

Its subcellular location is the nucleus. It localises to the chromosome. Its function is as follows. Core component of nucleosome. Nucleosomes wrap and compact DNA into chromatin, limiting DNA accessibility to the cellular machineries which require DNA as a template. Histones thereby play a central role in transcription regulation, DNA repair, DNA replication and chromosomal stability. DNA accessibility is regulated via a complex set of post-translational modifications of histones, also called histone code, and nucleosome remodeling. This chain is Histone H3.3C-like, found in Bos taurus (Bovine).